The primary structure comprises 154 residues: MVKAVCVLRGDSKITGIVNFEQESDSSPTTISWEISNHDADAKRGFHITPFGDNTNGCTSAGPHFNPHGKTHGNVTDENRHVGDMGNIETDCDGNSKGSIKDKLIKLIGPHSVIGRTVVIHAGTDDLGKGGNDESLKTGNAGPRPACGVIGVAN.

Residues histidine 47 and histidine 64 each coordinate Cu cation. Cysteine 58 and cysteine 147 are joined by a disulfide. 4 residues coordinate Zn(2+): histidine 64, histidine 72, histidine 81, and aspartate 84. Histidine 121 lines the Cu cation pocket. Arginine 144 contacts substrate.

This sequence belongs to the Cu-Zn superoxide dismutase family. In terms of assembly, homodimer. Cu cation is required as a cofactor. Zn(2+) serves as cofactor.

The protein localises to the cytoplasm. It carries out the reaction 2 superoxide + 2 H(+) = H2O2 + O2. Destroys radicals which are normally produced within the cells and which are toxic to biological systems. This is Superoxide dismutase [Cu-Zn] (SOD1) from Pleurocordyceps sinensis (Polycephalomyces sinensis).